The primary structure comprises 744 residues: Elongation factor G, mitochondrial (744 aa).

A tr-type G domain is found at 39–316; sequence EKIRNIGISA…AVIDYLPNPG (278 aa). Residues 48 to 55, 115 to 119, and 169 to 172 each bind GTP; these read AHIDSGKT, DTPGH, and NKLD. Residues 725 to 735 show a composition bias toward polar residues; sequence VRQYQETQGAS. Positions 725-744 are disordered; the sequence is VRQYQETQGASQPDKKKKKN.

It belongs to the TRAFAC class translation factor GTPase superfamily. Classic translation factor GTPase family. EF-G/EF-2 subfamily.

Its subcellular location is the mitochondrion. Its pathway is protein biosynthesis; polypeptide chain elongation. In terms of biological role, mitochondrial GTPase that catalyzes the GTP-dependent ribosomal translocation step during translation elongation. During this step, the ribosome changes from the pre-translocational (PRE) to the post-translocational (POST) state as the newly formed A-site-bound peptidyl-tRNA and P-site-bound deacylated tRNA move to the P and E sites, respectively. Catalyzes the coordinated movement of the two tRNA molecules, the mRNA and conformational changes in the ribosome. Essential during development as it acts as a retrograde signal from mitochondria to the nucleus to slow down cell proliferation if mitochondrial energy output is low. This Drosophila pseudoobscura pseudoobscura (Fruit fly) protein is Elongation factor G, mitochondrial.